The primary structure comprises 398 residues: Enoyl-[acyl-carrier-protein] reductase [NADH] (398 aa).

Residues 48–53 (GASTGY), 74–75 (FE), 111–112 (DG), and 139–140 (LA) each bind NAD(+). Tyr-225 lines the substrate pocket. Tyr-235 serves as the catalytic Proton donor. Residues Lys-244 and 273-275 (VVT) each bind NAD(+).

It belongs to the TER reductase family. In terms of assembly, monomer.

The catalysed reaction is a 2,3-saturated acyl-[ACP] + NAD(+) = a (2E)-enoyl-[ACP] + NADH + H(+). The protein operates within lipid metabolism; fatty acid biosynthesis. Its function is as follows. Involved in the final reduction of the elongation cycle of fatty acid synthesis (FAS II). Catalyzes the reduction of a carbon-carbon double bond in an enoyl moiety that is covalently linked to an acyl carrier protein (ACP). The protein is Enoyl-[acyl-carrier-protein] reductase [NADH] of Variovorax paradoxus (strain S110).